Consider the following 1031-residue polypeptide: LRR receptor-like serine/threonine-protein kinase EFR (1031 aa).

The first 24 residues, 1–24 (MKLSFSLVFNALTLLLQVCIFAQA), serve as a signal peptide directing secretion. The Extracellular segment spans residues 25–653 (RFSNETDMQA…LSVRKKVVSG (629 aa)). N-linked (GlcNAc...) asparagine glycans are attached at residues asparagine 28, asparagine 55, and asparagine 95. 10 LRR repeats span residues 98 to 120 (FLRLLNLADNSFGSTIPQKVGRL), 122 to 144 (RLQYLNMSYNLLEGRIPSSLSNC), 146 to 168 (RLSTVDLSSNHLGHGVPSELGSL), 170 to 193 (KLAILDLSKNNLTGNFPASLGNLT), 194 to 216 (SLQKLDFAYNQMRGEIPDEVARL), 218 to 240 (QMVFFQIALNSFSGGFPPALYNI), 242 to 264 (SLESLSLADNSFSGNLRADFGYL), 267 to 289 (NLRRLLLGTNQFTGAIPKTLANI), 291 to 312 (SLERFDISSNYLSGSIPLSFGK), and 315 to 335 (NLWWLGIRNNSLGNNSSSGLE). Asparagine 127 and asparagine 143 each carry an N-linked (GlcNAc...) asparagine glycan. Residues asparagine 180 and asparagine 191 are each glycosylated (N-linked (GlcNAc...) asparagine). A glycan (N-linked (GlcNAc...) asparagine) is linked at asparagine 239. The N-linked (GlcNAc...) asparagine glycan is linked to asparagine 288. N-linked (GlcNAc...) asparagine glycans are attached at residues asparagine 323, asparagine 329, asparagine 342, and asparagine 366. LRR repeat units follow at residues 345–368 (QLEYLDVGYNRLGGELPASIANLS), 370–392 (TLTSLFLGQNLISGTIPHDIGNL), 394–416 (SLQELSLETNMLSGELPVSFGKL), 418–440 (NLQVVDLYSNAISGEIPSYFGNM), 442–464 (RLQKLHLNSNSFHGRIPQSLGRC), 466–487 (YLLDLWMDTNRLNGTIPQEILQ), 490–512 (SLAYIDLSNNFLTGHFPEEVGKL), 514–536 (LLVGLGASYNKLSGKMPQAIGGC), 538–560 (SMEFLFMQGNSFDGAIPDISRLV), 561–584 (SLKNVDFSNNNLSGRIPRYLASLP), and 585–597 (SLRNLNLSMNKFE). Asparagine 439 is a glycosylation site (N-linked (GlcNAc...) asparagine). Asparagine 478 carries N-linked (GlcNAc...) asparagine glycosylation. Residues asparagine 571, asparagine 590, and asparagine 608 are each glycosylated (N-linked (GlcNAc...) asparagine). A helical transmembrane segment spans residues 654–674 (ICIGIASLLLIIIVASLCWFM). At 675 to 1031 (KRKKKNNASD…WMLNTDMHTM (357 aa)) the chain is on the cytoplasmic side. The residue at position 709 (threonine 709) is a Phosphothreonine. The Protein kinase domain maps to 712 to 1001 (FSSTNLIGSG…ELISIRSKFF (290 aa)). Residues 718-726 (IGSGNFGNV) and lysine 741 each bind ATP. 2 positions are modified to phosphotyrosine: tyrosine 791 and tyrosine 836. Aspartate 849 (proton acceptor) is an active-site residue. Tyrosine 897 bears the Phosphotyrosine mark. The span at 1005–1020 (TTITESPRDAPQSSPQ) shows a compositional bias: polar residues. Residues 1005-1031 (TTITESPRDAPQSSPQEWMLNTDMHTM) are disordered.

It belongs to the protein kinase superfamily. Ser/Thr protein kinase family. Binds to Pseudomonas syringae AvrPto1 and (via the kinase and cytoplasmic domains) to hopD2. Interacts with SERK3/BAK1, SERK4/BKK1, SERK1 and SERK2 in a specific ligand-induced manner. Binds to IOS1. Binds to BIK1 in the absence of pathogen elicitor; dissociates upon pathogen-associated molecular pattern (PAMP)-triggered activation. In terms of processing, autophosphorylated after elicitation with elfl18. Autophosphorylation is inhibited by the binding with avrPto1. Phosphorylation at T-836 is required for immune signaling. Polyubiquitinated at the kinase domain mediated by P.syringae AvrPtoB.

It localises to the cell membrane. Its subcellular location is the endomembrane system. The enzyme catalyses L-seryl-[protein] + ATP = O-phospho-L-seryl-[protein] + ADP + H(+). The catalysed reaction is L-threonyl-[protein] + ATP = O-phospho-L-threonyl-[protein] + ADP + H(+). Constitutes the pattern-recognition receptor (PPR) that determines the specific perception of elongation factor Tu (EF-Tu), a potent elicitor of the defense response to pathogen-associated molecular patterns (PAMPs); phosphorylates BIK1 upon elicitation to regulate immune responses such as defense hormone expression (e.g. jasmonic acid (JA) and salicylic acid (SA)). Reduces transformation by Rhizobium radiobacter probably by inducing plant defense during the interaction. Binding to the effector AvrPto1 from P.syringae blocks the downstream plant immune response while interaction with hopD2 decreases the phosphorylation level of EFR upon elf18 treatment. Specific endoplasmic reticulum quality control components (ERD2B, CRT3, UGGT and STT3A) are required for the biogenesis of EFR. This is LRR receptor-like serine/threonine-protein kinase EFR from Arabidopsis thaliana (Mouse-ear cress).